The chain runs to 650 residues: Leukocyte immunoglobulin-like receptor subfamily B member 1 (650 aa).

Positions 1 to 23 are cleaved as a signal peptide; it reads MTPILTVLICLGLSLGPRTHVQA. Over 24 to 461 the chain is Extracellular; it reads GHLPKPTLWA…QSGLGRHLGV (438 aa). Ig-like C2-type domains follow at residues 27–115, 116–221, 222–312, and 313–409; these read PKPT…DPLE, LVVT…LVLG, VSKK…APSD, and PLDI…YLLT. Disulfide bonds link C49-C98, C145-C197, C157-C167, and C246-C297. N-linked (GlcNAc...) asparagine glycosylation is found at N281, N302, and N341. C346 and C397 form a disulfide bridge. Residues 415 to 451 are disordered; the sequence is LELVVSGPSGGPSSPTTGPTSTSGPEDQPLTPTGSDP. Low complexity predominate over residues 425–439; that stretch reads GPSSPTTGPTSTSGP. Residues 462–482 form a helical membrane-spanning segment; the sequence is VIGILVAVILLLLLLLLLFLI. The Cytoplasmic segment spans residues 483–650; it reads LRHRRQGKHW…PSIYATLAIH (168 aa). Positions 491 to 524 are disordered; it reads HWTSTQRKADFQHPAGAVGPEPTDRGLQWRSSPA. 2 short sequence motifs (ITIM motif) span residues 531–536 and 560–565; these read NLYAAV and VTYAEV. Y533 carries the phosphotyrosine modification. The tract at residues 563-650 is disordered; that stretch reads AEVKHSRPRR…PSIYATLAIH (88 aa). 2 stretches are compositionally biased toward basic and acidic residues: residues 564-574 and 586-600; these read EVKHSRPRREM and LDTK…RQMD. 2 short sequence motifs (ITIM motif) span residues 612 to 617 and 642 to 647; these read VTYAQL and SIYATL. 2 positions are modified to phosphotyrosine: Y614 and Y644.

Binds PTPN6 when phosphorylated. Binds FCER1A and FCGR1A. Interacts with human cytomegalovirus/HHV-5 protein UL18. Interacts with peptide-bound HLA-G-B2M complex. Interacts with peptide-bound HLA-F-B2M complex but not with peptide-free HLA-F open conformer. It does not probe the peptide sequence directly. Post-translationally, phosphorylated on tyrosine residues. Dephosphorylated by PTPN6. As to expression, expressed in B cells, monocytes and various dendritic cell (DC) subsets including myeloid, plasmacytoid and tolerogenic DCs (at protein level). Expressed in decidual macrophages (at protein level). Expressed in decidual NK cells (at protein level).

Its subcellular location is the cell membrane. It is found in the secreted. Functionally, receptor for class I MHC antigens. Recognizes a broad spectrum of HLA-A, HLA-B, HLA-C, HLA-G and HLA-F alleles. Receptor for H301/UL18, a human cytomegalovirus class I MHC homolog. Ligand binding results in inhibitory signals and down-regulation of the immune response. Engagement of LILRB1 present on natural killer cells or T-cells by class I MHC molecules protects the target cells from lysis. Interaction with HLA-B or HLA-E leads to inhibition of FCER1A signaling and serotonin release. Inhibits FCGR1A-mediated phosphorylation of cellular proteins and mobilization of intracellular calcium ions. Recognizes HLA-G in complex with B2M/beta-2 microglobulin and a nonamer self-peptide. Upon interaction with peptide-bound HLA-G-B2M complex, triggers secretion of growth-promoting factors by decidual NK cells. Reprograms B cells toward an immune suppressive phenotype. In Homo sapiens (Human), this protein is Leukocyte immunoglobulin-like receptor subfamily B member 1.